The chain runs to 381 residues: UDP-4-amino-4-deoxy-L-arabinose--oxoglutarate aminotransferase (381 aa).

K182 carries the post-translational modification N6-(pyridoxal phosphate)lysine.

It belongs to the DegT/DnrJ/EryC1 family. ArnB subfamily. Homodimer. The cofactor is pyridoxal 5'-phosphate.

The catalysed reaction is UDP-4-amino-4-deoxy-beta-L-arabinose + 2-oxoglutarate = UDP-beta-L-threo-pentopyranos-4-ulose + L-glutamate. Its pathway is nucleotide-sugar biosynthesis; UDP-4-deoxy-4-formamido-beta-L-arabinose biosynthesis; UDP-4-deoxy-4-formamido-beta-L-arabinose from UDP-alpha-D-glucuronate: step 2/3. It participates in bacterial outer membrane biogenesis; lipopolysaccharide biosynthesis. Catalyzes the conversion of UDP-4-keto-arabinose (UDP-Ara4O) to UDP-4-amino-4-deoxy-L-arabinose (UDP-L-Ara4N). The modified arabinose is attached to lipid A and is required for resistance to polymyxin and cationic antimicrobial peptides. The protein is UDP-4-amino-4-deoxy-L-arabinose--oxoglutarate aminotransferase of Edwardsiella ictaluri (strain 93-146).